The following is a 172-amino-acid chain: NADH-quinone oxidoreductase subunit B (172 aa).

Cysteine 46, cysteine 47, cysteine 111, and cysteine 141 together coordinate [4Fe-4S] cluster.

This sequence belongs to the complex I 20 kDa subunit family. As to quaternary structure, NDH-1 is composed of 14 different subunits. Subunits NuoB, C, D, E, F, and G constitute the peripheral sector of the complex. Requires [4Fe-4S] cluster as cofactor.

Its subcellular location is the cell membrane. The catalysed reaction is a quinone + NADH + 5 H(+)(in) = a quinol + NAD(+) + 4 H(+)(out). Functionally, NDH-1 shuttles electrons from NADH, via FMN and iron-sulfur (Fe-S) centers, to quinones in the respiratory chain. The immediate electron acceptor for the enzyme in this species is believed to be a menaquinone. Couples the redox reaction to proton translocation (for every two electrons transferred, four hydrogen ions are translocated across the cytoplasmic membrane), and thus conserves the redox energy in a proton gradient. In Bacillus cytotoxicus (strain DSM 22905 / CIP 110041 / 391-98 / NVH 391-98), this protein is NADH-quinone oxidoreductase subunit B.